Here is a 179-residue protein sequence, read N- to C-terminus: Peptide deformylase (179 aa).

Residues cysteine 103 and histidine 145 each contribute to the Fe cation site. Glutamate 146 is a catalytic residue. Histidine 149 lines the Fe cation pocket.

The protein belongs to the polypeptide deformylase family. It depends on Fe(2+) as a cofactor.

It carries out the reaction N-terminal N-formyl-L-methionyl-[peptide] + H2O = N-terminal L-methionyl-[peptide] + formate. Its function is as follows. Removes the formyl group from the N-terminal Met of newly synthesized proteins. Requires at least a dipeptide for an efficient rate of reaction. N-terminal L-methionine is a prerequisite for activity but the enzyme has broad specificity at other positions. This chain is Peptide deformylase, found in Leptospira biflexa serovar Patoc (strain Patoc 1 / Ames).